The primary structure comprises 466 residues: Asparagine--tRNA ligase (466 aa).

Belongs to the class-II aminoacyl-tRNA synthetase family. Homodimer.

The protein resides in the cytoplasm. It catalyses the reaction tRNA(Asn) + L-asparagine + ATP = L-asparaginyl-tRNA(Asn) + AMP + diphosphate + H(+). In Photobacterium profundum (strain SS9), this protein is Asparagine--tRNA ligase.